The primary structure comprises 250 residues: Putative ankyrin repeat protein RBE_0623 (250 aa).

3 ANK repeats span residues Ile70–Thr99, Asn104–Glu134, and Gly137–Phe166.

The sequence is that of Putative ankyrin repeat protein RBE_0623 from Rickettsia bellii (strain RML369-C).